The following is a 93-amino-acid chain: Large ribosomal subunit protein uL23 (93 aa).

The protein belongs to the universal ribosomal protein uL23 family. As to quaternary structure, part of the 50S ribosomal subunit. Contacts protein L29, and trigger factor when it is bound to the ribosome.

Functionally, one of the early assembly proteins it binds 23S rRNA. One of the proteins that surrounds the polypeptide exit tunnel on the outside of the ribosome. Forms the main docking site for trigger factor binding to the ribosome. This Helicobacter pylori (strain P12) protein is Large ribosomal subunit protein uL23.